The following is a 309-amino-acid chain: Golgi to ER traffic protein 4 homolog (309 aa).

The disordered stretch occupies residues 290–309 (SGGGLASMEVDGPTIEDEMD).

Belongs to the GET4 family.

May play a role in insertion of tail-anchored proteins into the endoplasmic reticulum membrane. This chain is Golgi to ER traffic protein 4 homolog, found in Dictyostelium discoideum (Social amoeba).